We begin with the raw amino-acid sequence, 221 residues long: Oxaloacetate tautomerase oaa1, mitochondrial (221 aa).

Residues glutamate 59, glutamate 61, and aspartate 93 each coordinate Mg(2+).

This sequence belongs to the FAH family. The cofactor is Mg(2+). It depends on Mn(2+) as a cofactor.

It localises to the mitochondrion. Its subcellular location is the cytoplasm. The enzyme catalyses oxaloacetate = enol-oxaloacetate. Functionally, tautomerase that converts enol-oxaloacetate, a strong inhibitor of succinate dehydrogenase, to the physiological keto form of oxaloacetate. The polypeptide is Oxaloacetate tautomerase oaa1, mitochondrial (Schizosaccharomyces pombe (strain 972 / ATCC 24843) (Fission yeast)).